A 345-amino-acid chain; its full sequence is Anthranilate phosphoribosyltransferase (345 aa).

Residues Gly-83, 86–87 (GD), Thr-91, 93–96 (NIST), 111–119 (KHGNRNLSS), and Ser-123 each bind 5-phospho-alpha-D-ribose 1-diphosphate. Gly-83 serves as a coordination point for anthranilate. Ser-95 contacts Mg(2+). Asn-114 lines the anthranilate pocket. Anthranilate is bound at residue Arg-169. 2 residues coordinate Mg(2+): Asp-228 and Glu-229.

Belongs to the anthranilate phosphoribosyltransferase family. Homodimer. The cofactor is Mg(2+).

It carries out the reaction N-(5-phospho-beta-D-ribosyl)anthranilate + diphosphate = 5-phospho-alpha-D-ribose 1-diphosphate + anthranilate. It participates in amino-acid biosynthesis; L-tryptophan biosynthesis; L-tryptophan from chorismate: step 2/5. In terms of biological role, catalyzes the transfer of the phosphoribosyl group of 5-phosphorylribose-1-pyrophosphate (PRPP) to anthranilate to yield N-(5'-phosphoribosyl)-anthranilate (PRA). This chain is Anthranilate phosphoribosyltransferase, found in Paracoccus denitrificans (strain Pd 1222).